The primary structure comprises 120 residues: NAD(P)H-quinone oxidoreductase subunit 3, chloroplastic (120 aa).

The next 3 helical transmembrane spans lie at 7–27 (YQTF…ALLI), 64–84 (SFAL…PWAM), and 89–109 (LGIF…IGLV).

It belongs to the complex I subunit 3 family. NDH is composed of at least 16 different subunits, 5 of which are encoded in the nucleus.

It is found in the plastid. Its subcellular location is the chloroplast thylakoid membrane. The enzyme catalyses a plastoquinone + NADH + (n+1) H(+)(in) = a plastoquinol + NAD(+) + n H(+)(out). It catalyses the reaction a plastoquinone + NADPH + (n+1) H(+)(in) = a plastoquinol + NADP(+) + n H(+)(out). Its function is as follows. NDH shuttles electrons from NAD(P)H:plastoquinone, via FMN and iron-sulfur (Fe-S) centers, to quinones in the photosynthetic chain and possibly in a chloroplast respiratory chain. The immediate electron acceptor for the enzyme in this species is believed to be plastoquinone. Couples the redox reaction to proton translocation, and thus conserves the redox energy in a proton gradient. In Psilotum nudum (Whisk fern), this protein is NAD(P)H-quinone oxidoreductase subunit 3, chloroplastic.